Reading from the N-terminus, the 130-residue chain is Small ribosomal subunit protein uS9 (130 aa).

The protein belongs to the universal ribosomal protein uS9 family.

This is Small ribosomal subunit protein uS9 from Alkalilimnicola ehrlichii (strain ATCC BAA-1101 / DSM 17681 / MLHE-1).